We begin with the raw amino-acid sequence, 457 residues long: MEFDTIAAISTPPGEGAIAIIRLSGPEAIQIADRIFYAKKNLSEAESHTIHYGHIKEDGEVIEEVMVTVMRAPRTFTREDVVEINAHGGIVSVNRVLQLLLRNGANLAEPGEFTKRAFLNGRIDLSQAEAVMDLIRAKTDRAMGVAIRQMDGNLSRLIRNLRQEILDALAQVEVNIDYPEYDDVEEMTQRMLLEKTELVRASVEQLLQTASQGKILREGLATAIIGRPNVGKSSLLNQLIQEEKAIVTDIAGTTRDIIEEYVNVRGVPLRLIDTAGIRETEDIVEKIGVERSRKALADADFILLVLNQNEELTVEDEALFEAAAGHNYVVVLNKTDLETKLDINKVRELAGENPIVSTSLVNDEGLEALEEAIKTLFFAGDIDAGDATYVSNVRHIALLHQALEALNAVTTGIQLGMPVDIVQIDMTRAWDLLGEITGDSVQDELLDQLFNQFCLGK.

(6S)-5-formyl-5,6,7,8-tetrahydrofolate is bound by residues arginine 22, glutamate 83, and arginine 122. Positions glycine 219–phenylalanine 378 constitute a TrmE-type G domain. Asparagine 229 serves as a coordination point for K(+). GTP-binding positions include asparagine 229–serine 234, threonine 248–threonine 254, and aspartate 273–glycine 276. Serine 233 is a Mg(2+) binding site. K(+) contacts are provided by threonine 248, isoleucine 250, and threonine 253. Threonine 254 serves as a coordination point for Mg(2+). Lysine 457 is a (6S)-5-formyl-5,6,7,8-tetrahydrofolate binding site.

This sequence belongs to the TRAFAC class TrmE-Era-EngA-EngB-Septin-like GTPase superfamily. TrmE GTPase family. As to quaternary structure, homodimer. Heterotetramer of two MnmE and two MnmG subunits. It depends on K(+) as a cofactor.

Its subcellular location is the cytoplasm. Its function is as follows. Exhibits a very high intrinsic GTPase hydrolysis rate. Involved in the addition of a carboxymethylaminomethyl (cmnm) group at the wobble position (U34) of certain tRNAs, forming tRNA-cmnm(5)s(2)U34. In Listeria welshimeri serovar 6b (strain ATCC 35897 / DSM 20650 / CCUG 15529 / CIP 8149 / NCTC 11857 / SLCC 5334 / V8), this protein is tRNA modification GTPase MnmE.